A 142-amino-acid polypeptide reads, in one-letter code: Large ribosomal subunit protein uL13 (142 aa).

This sequence belongs to the universal ribosomal protein uL13 family. As to quaternary structure, part of the 50S ribosomal subunit.

Functionally, this protein is one of the early assembly proteins of the 50S ribosomal subunit, although it is not seen to bind rRNA by itself. It is important during the early stages of 50S assembly. The chain is Large ribosomal subunit protein uL13 from Halorhodospira halophila (strain DSM 244 / SL1) (Ectothiorhodospira halophila (strain DSM 244 / SL1)).